A 510-amino-acid chain; its full sequence is DNA-directed RNA polymerase I subunit RPA34 (510 aa).

Met-1 is modified (N-acetylmethionine). Residues 1–31 form a disordered region; that stretch reads MEEPQAGDAARFSCPPNFTAKPPASESPRFS. Residue Ser-27 is modified to Phosphoserine. Tyr-80 bears the Phosphotyrosine mark. A disordered region spans residues 120–143; the sequence is GPQQSLSGSPLQPIPASPPPQIPP. Phosphoserine is present on residues Ser-128, Ser-136, Ser-172, and Ser-205. A compositionally biased stretch (pro residues) spans 131–143; the sequence is QPIPASPPPQIPP. A disordered region spans residues 203–510; it reads LGSPEMDVRK…KRKQQQQQPV (308 aa). The segment covering 258–270 has biased composition (basic and acidic residues); the sequence is GKETFEPEDKTVK. Lys-270 participates in a covalent cross-link: Glycyl lysine isopeptide (Lys-Gly) (interchain with G-Cter in SUMO1); alternate. Lys-270 is covalently cross-linked (Glycyl lysine isopeptide (Lys-Gly) (interchain with G-Cter in SUMO2); alternate). Residue Ser-285 is modified to Phosphoserine. Thr-287 carries the post-translational modification Phosphothreonine. Ser-309 carries the post-translational modification Phosphoserine. Lys-314 is covalently cross-linked (Glycyl lysine isopeptide (Lys-Gly) (interchain with G-Cter in SUMO1); alternate). A Glycyl lysine isopeptide (Lys-Gly) (interchain with G-Cter in SUMO2); alternate cross-link involves residue Lys-314. Composition is skewed to low complexity over residues 372 to 382 and 394 to 407; these read AKPQAQAALAA and DATV…VGPE. The segment covering 421–430 has biased composition (basic residues); the sequence is TKKKKKKKER. Residues 436–452 are compositionally biased toward low complexity; sequence EPIQPLEPELPGEGQPE. Ser-490 carries the phosphoserine modification.

The protein belongs to the eukaryotic RPA34 RNA polymerase subunit family. As to quaternary structure, component of the RNA polymerase I (Pol I) complex consisting of 13 subunits: a ten-subunit catalytic core composed of POLR1A/RPA1, POLR1B/RPA2, POLR1C/RPAC1, POLR1D/RPAC2, POLR1H/RPA12, POLR2E/RPABC1, POLR2F/RPABC2, POLR2H/RPABC3, POLR2K/RPABC4 and POLR2L/RPABC5; a mobile stalk subunit POLR1F/RPA43 protruding from the core and additional subunits homologous to general transcription factors POLR1E/RPA49 and POLR1G/RPA34. Forms a heterodimer with POLR1E/RPA49. Part of Pol I pre-initiation complex (PIC), in which Pol I core assembles with RRN3 and promoter-bound UTBF and SL1/TIF-IB complex. Interacts with TAF1A thereby associates with the SL1/TIF-IB complex. Interacts with UBTF. Interacts with POLR1E/PRAF1 through its N-terminal region. In terms of assembly, interacts with CD3E. Post-translationally, undergoes tyrosine phosphorylation upon T-cell receptor (TCR) stimulation. This phosphorylation has not been confirmed by other groups. Phosphorylated on tyrosine residues in initiation-competent Pol I-beta complexes but not in Pol I-alpha complexes.

Its subcellular location is the nucleus. The protein localises to the nucleolus. The protein resides in the chromosome. Its function is as follows. Component of RNA polymerase I (Pol I), a DNA-dependent RNA polymerase which synthesizes ribosomal RNA precursors using the four ribonucleoside triphosphates as substrates. Involved in UBTF-activated transcription, presumably at a step following PIC formation. Functionally, has been described as a component of preformed T-cell receptor (TCR) complex. The sequence is that of DNA-directed RNA polymerase I subunit RPA34 from Homo sapiens (Human).